The following is a 496-amino-acid chain: Probable E3 ubiquitin-protein ligase XBOS32 (496 aa).

5 ANK repeats span residues 50 to 79 (GRNSPLHYAAAQGHHEIVSLLLESGVEINL), 83 to 112 (RGQTALMQACQYGHWEVVQTLMLFNANVHR), 117 to 147 (NGGSALHFAALHGHARCLRLVLADYVPSMPN), 180 to 209 (GGLTPLHMAALNGHVECVQLLLDLGASVIE), and 223 to 252 (AGSTPLHYAACGGNAVCCQLLIARGASLSA). The RING-type zinc-finger motif lies at 321 to 368 (CAVCLEGSCSVAAEGCKHEFCTRCALYLCSTSYTSVSPAGAIPCPLCR).

The enzyme catalyses S-ubiquitinyl-[E2 ubiquitin-conjugating enzyme]-L-cysteine + [acceptor protein]-L-lysine = [E2 ubiquitin-conjugating enzyme]-L-cysteine + N(6)-ubiquitinyl-[acceptor protein]-L-lysine.. It participates in protein modification; protein ubiquitination. The sequence is that of Probable E3 ubiquitin-protein ligase XBOS32 (XBOS32) from Oryza sativa subsp. japonica (Rice).